The primary structure comprises 589 residues: MAQFLLTVLQVLLALTFWIGIGSGSSNHYNAGDHVPLFVNKVGPLHNPSETYQYYDLPFCRRGPVIEKQETLGEVLNGDRLMSSLYKLKFREDKTHFVLCRKRLTSSDIARFRDIIAQDYYFQMYYDDLPLWGFVGKVEGDYFGQGEKHTKYYIFSHLKFNVLYNADKVIEINSFSDPSYMVDISENTEIDVQFTYSVSWNLTSERSETRMNKYSRASFHPISQKIHFFSFLNSITVVVLLIGLISFLFMRHLKNELRSYSIGDEEERKEAGWKLVHSDVFRCPRNISWLCAILGTGTQLLILIIALFALAFTGFLYPYNRGMLLTSLVIMYTLTSIVAGYTSTSFHSQFEGNKQKRSVRLAGILYPVPFFIILSVLNTVAITYGATAALPFGTIVIIILIFTLLNIPFLMLGGVLGNRFGLLEFQPPSAVKRNPREIPPQNWYRRKLYQVFLGGFVPFSAVVLEWHQLYASLWGFKIYTSPGIMLFTFIVLIFLSSSVGIILTYIQLSGEDHEWWWRSILCGGFTAVFMYGYGVLFYLRSDMTGFLQLSFYLGYTALLCYALFLVLGTISFLASLMFIRHIYRSVKLE.

Positions 1-24 (MAQFLLTVLQVLLALTFWIGIGSG) are cleaved as a signal peptide. Topologically, residues 25-227 (SSNHYNAGDH…SFHPISQKIH (203 aa)) are lumenal. The chain crosses the membrane as a helical span at residues 228-248 (FFSFLNSITVVVLLIGLISFL). Over 249–291 (FMRHLKNELRSYSIGDEEERKEAGWKLVHSDVFRCPRNISWLC) the chain is Cytoplasmic. Residues 292 to 312 (AILGTGTQLLILIIALFALAF) traverse the membrane as a helical segment. Over 313 to 321 (TGFLYPYNR) the chain is Lumenal. A helical membrane pass occupies residues 322-342 (GMLLTSLVIMYTLTSIVAGYT). Residues 343-361 (STSFHSQFEGNKQKRSVRL) are Cytoplasmic-facing. A helical transmembrane segment spans residues 362-382 (AGILYPVPFFIILSVLNTVAI). Over 383-394 (TYGATAALPFGT) the chain is Lumenal. A helical transmembrane segment spans residues 395-415 (IVIIILIFTLLNIPFLMLGGV). At 416 to 450 (LGNRFGLLEFQPPSAVKRNPREIPPQNWYRRKLYQ) the chain is on the cytoplasmic side. The helical transmembrane segment at 451–471 (VFLGGFVPFSAVVLEWHQLYA) threads the bilayer. The Lumenal portion of the chain corresponds to 472-482 (SLWGFKIYTSP). A helical transmembrane segment spans residues 483 to 503 (GIMLFTFIVLIFLSSSVGIIL). Over 504 to 518 (TYIQLSGEDHEWWWR) the chain is Cytoplasmic. The helical transmembrane segment at 519-539 (SILCGGFTAVFMYGYGVLFYL) threads the bilayer. Over 540–550 (RSDMTGFLQLS) the chain is Lumenal. The chain crosses the membrane as a helical span at residues 551–571 (FYLGYTALLCYALFLVLGTIS). Residues 572 to 589 (FLASLMFIRHIYRSVKLE) are Cytoplasmic-facing. The Endoplasmic reticulum export signal motif lies at 578 to 583 (FIRHIY). The short motif at 587 to 589 (KLE) is the Golgi retention signal element.

Belongs to the nonaspanin (TM9SF) (TC 9.A.2) family. As to expression, expressed in the root cap and in giant cells.

It localises to the endosome membrane. The protein resides in the golgi apparatus membrane. This Arabidopsis thaliana (Mouse-ear cress) protein is Transmembrane 9 superfamily member 5.